The primary structure comprises 315 residues: Lipase 3 (315 aa).

Residues Met-1–Gly-18 form the signal peptide. Residue Cys-19 is the site of N-palmitoyl cysteine attachment. The S-diacylglycerol cysteine moiety is linked to residue Cys-19. An AB hydrolase-1 domain is found at Pro-69 to Val-296. His-74 is an active-site residue. Catalysis depends on Ser-142, which acts as the Charge relay system.

The protein belongs to the lipase/esterase LIP3/BchO family.

It localises to the cell membrane. It carries out the reaction a triacylglycerol + H2O = a diacylglycerol + a fatty acid + H(+). The sequence is that of Lipase 3 (lip3) from Moraxella sp. (strain TA144).